The sequence spans 125 residues: Small ribosomal subunit protein uS12 (125 aa).

Asp-89 is modified (3-methylthioaspartic acid).

It belongs to the universal ribosomal protein uS12 family. Part of the 30S ribosomal subunit. Contacts proteins S8 and S17. May interact with IF1 in the 30S initiation complex.

Functionally, with S4 and S5 plays an important role in translational accuracy. Interacts with and stabilizes bases of the 16S rRNA that are involved in tRNA selection in the A site and with the mRNA backbone. Located at the interface of the 30S and 50S subunits, it traverses the body of the 30S subunit contacting proteins on the other side and probably holding the rRNA structure together. The combined cluster of proteins S8, S12 and S17 appears to hold together the shoulder and platform of the 30S subunit. The chain is Small ribosomal subunit protein uS12 from Clostridium acetobutylicum (strain ATCC 824 / DSM 792 / JCM 1419 / IAM 19013 / LMG 5710 / NBRC 13948 / NRRL B-527 / VKM B-1787 / 2291 / W).